The primary structure comprises 781 residues: Catenin beta-1 (781 aa).

A2 bears the N-acetylalanine mark. The interval 2-23 (ATQADLMELDMAMEPDRKAAVS) is interaction with VCL. The residue at position 23 (S23) is a Phosphoserine; by GSK3-beta; alternate. The O-linked (GlcNAc) serine; alternate glycan is linked to S23. S29 carries the post-translational modification Phosphoserine; by GSK3-beta. A phosphoserine; by GSK3-beta and HIPK2 mark is found at S33 and S37. The tract at residues 34 to 57 (GIHSGATTTAPSLSGKGNPEEEDV) is disordered. A Phosphothreonine; by GSK3-beta modification is found at T41. Residue S45 is modified to Phosphoserine. Residue K49 is modified to N6-acetyllysine. Phosphotyrosine; by PTK6 is present on Y64. A Phosphotyrosine; by FYN and PTK6 modification is found at Y142. 12 ARM repeats span residues 151-191 (RAIP…IMRS), 193-234 (QMVS…IFKS), 235-276 (GGIP…VRLA), 277-318 (GGLQ…ILAS), 319-360 (GGPQ…IVEA), 361-389 (GGMQ…RNLS), 400-441 (GLLG…VCQV), 442-484 (GGIE…AQNA), 489-530 (YGLP…LREQ), 531-571 (GAIP…EIVE), 594-636 (NTIP…AEGA), and 637-666 (TAPL…SEDK). The interaction with BCL9 stretch occupies residues 156–178 (LTKLLNDEDQVVVNKAAVMVHQL). S191 is modified (phosphoserine). S246 carries the phosphoserine; by CDK5 modification. Phosphotyrosine is present on residues Y331 and Y333. Residue S552 is modified to Phosphoserine. At T556 the chain carries Phosphothreonine. C619 carries the post-translational modification S-nitrosocysteine. The residue at position 675 (S675) is a Phosphoserine. Positions 720–781 (HSGGYGQDAL…NQLAWFDTDL (62 aa)) are disordered. Basic and acidic residues predominate over residues 734–745 (MMEHEMGGHHPG). The interaction with SCRIB stretch occupies residues 772-781 (NQLAWFDTDL).

Belongs to the beta-catenin family. In terms of assembly, two separate complex-associated pools are found in the cytoplasm. The majority is present as component of an E-cadherin/ catenin adhesion complex composed of at least E-cadherin/CDH1 and beta-catenin/CTNNB1, and possibly alpha-catenin/CTNNA1; the complex is located to adherens junctions. The stable association of CTNNA1 is controversial as CTNNA1 was shown not to bind to F-actin when assembled in the complex. Alternatively, the CTNNA1-containing complex may be linked to F-actin by other proteins such as LIMA1. Another cytoplasmic pool is part of a large complex containing AXIN1, AXIN2, APC, CSNK1A1 and GSK3B that promotes phosphorylation on N-terminal Ser and Thr residues and ubiquitination of CTNNB1. Interacts directly with AXIN1; the interaction is regulated by CK2 via BTRC and its subsequent degradation by the proteasome. Interacts directly with AXIN1; the interaction is regulated by CDK2 phosphorylation. Wnt-dependent activation of DVL antagonizes the action of GSK3B. When GSK3B activity is inhibited the complex dissociates, CTNNB1 is dephosphorylated and is no longer targeted for destruction. The stabilized protein translocates to the nucleus, where it binds TCF/LEF-1 family members, BCL9, BCL9L and possibly also RUVBL1 and CHD8. Binds CTNNBIP and EP300. CTNNB1 forms a ternary complex with LEF1 and EP300 that is disrupted by CTNNBIP1 binding. Interacts with TAX1BP3 (via the PDZ domain); this interaction inhibits the transcriptional activity of CTNNB1. Interacts with AJAP1, BAIAP1, CARM1, CTNNA3, CXADR and PCDH11Y. Binds NHERF1. Interacts with GLIS2. Interacts with XIRP1. Interacts with PTPRU (via the cytoplasmic juxtamembrane domain) and with SLC30A9. Interacts with EMD. Interacts with SCRIB. Interacts with TNIK and TCF7L2. Interacts with SESTD1 and TRPC4. Interacts directly with AXIN1; the interaction is regulated by CDK2 phosphorylation of AXIN1. Interacts with CAV1. Interacts with TRPV4. The TRPV4 and CTNNB1 complex can interact with CDH1. Interacts with VCL. Interacts with PTPRJ. Interacts with PKT7. Interacts with NANOS1. Interacts with CDK2, NDRG2, NEK2 and CDK5. Found in a complex composed of MACF1, APC, AXIN1, CTNNB1 and GSK3B. Interacts with PTK6. Interacts with SOX7; this interaction may lead to proteasomal degradation of active CTNNB1 and thus inhibition of Wnt/beta-catenin-stimulated transcription. Identified in a complex with HINT1 and MITF. Interacts with FHIT. The CTNNB1 and TCF4 complex interacts with PML. Interacts with FERMT2. Identified in a complex with TCF4 and FERMT2. Interacts with RAPGEF2. Interacts with FAT1 (via the cytoplasmic domain). Interacts with RORA. May interact with P-cadherin/CDH3. Interacts with RNF220. Interacts with CTNND2. Interacts (via the C-terminal region) with CBY1. The complex composed, at least, of APC, CTNNB1 and GSK3B interacts with JPT1; the interaction requires the inactive form of GSK3B (phosphorylated at 'Ser-9'). Interacts with DLG5. Interacts with FAM53B; promoting translocation to the nucleus. Interacts with TMEM170B. Interacts with AHI1. Interacts with GID8. Component of an cadherin:catenin adhesion complex composed of at least of CDH26, beta-catenin/CTNNB1, alpha-catenin/CTNNA1 and p120 catenin/CTNND1. Forms a complex comprising APPL1, RUVBL2, APPL2, HDAC1 and HDAC2. Interacts with IRF2BPL; mediates the ubiquitination and degradation of CTNNB1. Interacts with AMFR. Interacts with LMBR1L. Interacts with SOX30; prevents interaction of CTNNB1 with TCF7L2/TCF4 and leads to inhibition of Wnt signaling. Interacts with SOX9; inhibiting CTNNB1 activity by competing with the binding sites of TCF/LEF within CTNNB1, thereby inhibiting the Wnt signaling. Interacts with SPN/CD43 cytoplasmic tail. Interacts (when phosphorylated at Tyr-333) with isoform M2 of PKM (PKM2); promoting transcription activation. Interacts with PKP2 (via HEAD domain). Interacts with CDH1. Interacts (when unphosphorylated) with FLYWCH1, perhaps preventing interaction of CTNNB1 with TCF4, and thereby regulating transcription activation; phosphorylation of CTNNB1 may inhibit the interaction. Interacts (via the central armadillo domains) with probable transcriptional regulator ADNP (via N-terminal region); interaction is direct and stabilizes CTNNB1 by modulating its phosphorylation by glycogen synthase kinase-3 beta GSK3B. Interacts with NR5A2. Interacts with DSG2; the interaction promotes localization of CTNNB1 at cell junctions thus reducing its nuclear localization and subsequent transcription of CTNNB1/TCF-target genes. Phosphorylation by GSK3B requires prior phosphorylation of Ser-45 by another kinase. Phosphorylation proceeds then from Thr-41 to Ser-33. Phosphorylated by NEK2. EGF stimulates tyrosine phosphorylation. Phosphorylated on Ser-33 and Ser-37 by HIPK2. This phosphorylation triggers proteasomal degradation. Phosphorylation at Ser-552 by AMPK promotes stabilization of the protein, enhancing TCF/LEF-mediated transcription. Phosphorylation on Ser-191 and Ser-246 by CDK5. Phosphorylation by CDK2 regulates insulin internalization. Phosphorylation by PTK6 at Tyr-64, Tyr-142, Tyr-331 and/or Tyr-333 with the predominant site at Tyr-64 is not essential for inhibition of transcriptional activity. Phosphorylation by SRC at Tyr-333 promotes interaction with isoform M2 of PKM (PKM2); promoting transcription activation. In terms of processing, ubiquitinated by the SCF(BTRC) E3 ligase complex when phosphorylated by GSK3B, leading to its degradation. Ubiquitinated by a E3 ubiquitin ligase complex containing UBE2D1, SIAH1, CACYBP/SIP, SKP1, APC and TBL1X, leading to its subsequent proteasomal degradation. Ubiquitinated and degraded following interaction with SOX9. Ubiquitinated via 'Lys-11'- and 'Lys-29'-linked ubiquitin chains by UBR5, leading to its stabilization. Post-translationally, S-nitrosylation at Cys-619 within adherens junctions promotes VEGF-induced, NO-dependent endothelial cell permeability by disrupting interaction with E-cadherin, thus mediating disassembly adherens junctions. O-glycosylation at Ser-23 decreases nuclear localization and transcriptional activity, and increases localization to the plasma membrane and interaction with E-cadherin CDH1. In terms of processing, deacetylated at Lys-49 by SIRT1. In terms of tissue distribution, expressed in the testis.

The protein localises to the cytoplasm. It localises to the nucleus. Its subcellular location is the cytoskeleton. The protein resides in the cell junction. It is found in the adherens junction. The protein localises to the cell membrane. It localises to the microtubule organizing center. Its subcellular location is the centrosome. The protein resides in the spindle pole. It is found in the synapse. The protein localises to the cilium basal body. Key downstream component of the canonical Wnt signaling pathway. In the absence of Wnt, forms a complex with AXIN1, AXIN2, APC, CSNK1A1 and GSK3B that promotes phosphorylation on N-terminal Ser and Thr residues and ubiquitination of CTNNB1 via BTRC and its subsequent degradation by the proteasome. In the presence of Wnt ligand, CTNNB1 is not ubiquitinated and accumulates in the nucleus, where it acts as a coactivator for transcription factors of the TCF/LEF family, leading to activate Wnt responsive genes. Also acts as a coactivator for other transcription factors, such as NR5A2. Promotes epithelial to mesenchymal transition/mesenchymal to epithelial transition (EMT/MET) via driving transcription of CTNNB1/TCF-target genes. Involved in the regulation of cell adhesion, as component of an E-cadherin:catenin adhesion complex. Acts as a negative regulator of centrosome cohesion. Involved in the CDK2/PTPN6/CTNNB1/CEACAM1 pathway of insulin internalization. Blocks anoikis of malignant kidney and intestinal epithelial cells and promotes their anchorage-independent growth by down-regulating DAPK2. Disrupts PML function and PML-NB formation by inhibiting RANBP2-mediated sumoylation of PML. Promotes neurogenesis by maintaining sympathetic neuroblasts within the cell cycle. Involved in chondrocyte differentiation via interaction with SOX9: SOX9-binding competes with the binding sites of TCF/LEF within CTNNB1, thereby inhibiting the Wnt signaling. Acts as a positive regulator of odontoblast differentiation during mesenchymal tooth germ formation, via promoting the transcription of differentiation factors such as LEF1, BMP2 and BMP4. Activity is repressed in a MSX1-mediated manner at the bell stage of mesenchymal tooth germ formation which prevents premature differentiation of odontoblasts. This Rattus norvegicus (Rat) protein is Catenin beta-1.